Consider the following 179-residue polypeptide: Serglycin (179 aa).

Residues 1 to 26 (MRQVPVGTRLVLALAFVLVWGSSVQG) form the signal peptide. The propeptide at 27-75 (YPARRARYQWVRCKPDGIFANCIEEKGPRFDLIAEESNVGPPMTDPVLM) is activation peptide. A disulfide bridge links Cys-39 with Cys-48. The disordered stretch occupies residues 86-145 (SDDYSGSGSGSGSGSGSGSGSGSGSGSGSGSGSGSGSGSGSGSGSGSGSGSGSLADMEWE). O-linked (Xyl...) (glycosaminoglycan) serine glycosylation is found at Ser-90 and Ser-92. Repeat copies occupy residues 90 to 91 (SG), 92 to 93 (SG), 94 to 95 (SG), 96 to 97 (SG), 98 to 99 (SG), 100 to 101 (SG), 102 to 103 (SG), 104 to 105 (SG), 106 to 107 (SG), 108 to 109 (SG), 110 to 111 (SG), 112 to 113 (SG), 114 to 115 (SG), 116 to 117 (SG), 118 to 119 (SG), 120 to 121 (SG), 122 to 123 (SG), 124 to 125 (SG), 126 to 127 (SG), 128 to 129 (SG), 130 to 131 (SG), 132 to 133 (SG), 134 to 135 (SG), and 136 to 137 (SG). Residues 90–137 (SGSGSGSGSGSGSGSGSGSGSGSGSGSGSGSGSGSGSGSGSGSGSGSG) form a 24 X 2 AA tandem repeats of S-G region. A compositionally biased stretch (gly residues) spans 92–136 (SGSGSGSGSGSGSGSGSGSGSGSGSGSGSGSGSGSGSGSGSGSGS). Ser-96, Ser-98, Ser-100, Ser-102, Ser-104, and Ser-106 each carry an O-linked (Xyl...) (glycosaminoglycan) serine glycan.

The protein belongs to the serglycin family. In terms of assembly, binds to activated CD44 and to GZMB. O-glycosylated; contains chondroitin sulfate and heparan sulfate.

It is found in the cytoplasmic granule. The protein resides in the cytolytic granule. It localises to the secreted. The protein localises to the extracellular space. Its subcellular location is the golgi apparatus. Functionally, plays a role in formation of mast cell secretory granules and mediates storage of various compounds in secretory vesicles. Required for storage of some proteases in both connective tissue and mucosal mast cells and for storage of granzyme B in T-lymphocytes. Plays a role in localizing neutrophil elastase in azurophil granules of neutrophils. Mediates processing of MMP2. Plays a role in cytotoxic cell granule-mediated apoptosis by forming a complex with granzyme B which is delivered to cells by perforin to induce apoptosis. Regulates the secretion of TNF-alpha and may also regulate protease secretion. Inhibits bone mineralization. The sequence is that of Serglycin (Srgn) from Rattus norvegicus (Rat).